A 175-amino-acid chain; its full sequence is Large ribosomal subunit protein uL10 (175 aa).

This sequence belongs to the universal ribosomal protein uL10 family. In terms of assembly, part of the ribosomal stalk of the 50S ribosomal subunit. The N-terminus interacts with L11 and the large rRNA to form the base of the stalk. The C-terminus forms an elongated spine to which L12 dimers bind in a sequential fashion forming a multimeric L10(L12)X complex.

Its function is as follows. Forms part of the ribosomal stalk, playing a central role in the interaction of the ribosome with GTP-bound translation factors. This is Large ribosomal subunit protein uL10 from Synechococcus elongatus (strain ATCC 33912 / PCC 7942 / FACHB-805) (Anacystis nidulans R2).